The primary structure comprises 214 residues: ER lumen protein-retaining receptor (214 aa).

Residues 1–4 (MVFN) are Lumenal-facing. The helical transmembrane segment at 5–23 (LFRISADLVHLLSIYFLLT) threads the bilayer. Residues 24–37 (KIISHKNCIGISLR) are Cytoplasmic-facing. Residues 38-55 (SQILFFIVWVTRYLDIFY) traverse the membrane as a helical segment. The Lumenal portion of the chain corresponds to 56-63 (NFYSLYNT). Residues 64–82 (ILKIVYLTTSAYTIYLISK) form a helical membrane-spanning segment. Topologically, residues 83–98 (RFRATYDKIHDTLNVW) are cytoplasmic. The chain crosses the membrane as a helical span at residues 99–112 (YLIVPCIVLAFIFT). Topologically, residues 113 to 119 (EDYSITE) are lumenal. The helical transmembrane segment at 120 to 139 (ICWTFSIFLEAVAILPQILL) threads the bilayer. At 140-151 (LRSTGEVENLNS) the chain is on the cytoplasmic side. A helical transmembrane segment spans residues 152–170 (QYIFCLGLYRALYIINWIY). Topologically, residues 171–181 (RYATEQSYWSP) are lumenal. A helical membrane pass occupies residues 182-202 (LTWICGSIQTLLYVEYFYYYI). At 203-214 (KSRVEGTKFVLP) the chain is on the cytoplasmic side.

The protein belongs to the ERD2 family.

The protein resides in the endoplasmic reticulum membrane. Required for the retention of luminal endoplasmic reticulum proteins. Determines the specificity of the luminal ER protein retention system. Also required for normal vesicular traffic through the Golgi. This Entamoeba histolytica (strain ATCC 30459 / HM-1:IMSS / ABRM) protein is ER lumen protein-retaining receptor.